The primary structure comprises 1541 residues: ATP-binding cassette sub-family C member 2 (1541 aa).

At 1-26 (MDKFCNSTFWDLSLLESPEADLPLCF) the chain is on the extracellular side. The N-linked (GlcNAc...) asparagine glycan is linked to N6. A helical transmembrane segment spans residues 27-47 (EQTVLVWIPLGFLWLLAPWQL). The Cytoplasmic segment spans residues 48-67 (YSVYRSRTKRSSITKFYLAK). The helical transmembrane segment at 68–88 (QVFVVFLLILAAIDLSLALTE) threads the bilayer. Over 89–92 (DTGQ) the chain is Extracellular. A helical transmembrane segment spans residues 93-113 (ATVPPVRYTNPILYLCTWLLV). The Cytoplasmic segment spans residues 114-125 (LAVQHSRQWCVR). The chain crosses the membrane as a helical span at residues 126–146 (KNSWFLSLFWILSVLCGVFQF). Residues 147 to 164 (QTLIRALLKDSKSNMAYS) are Extracellular-facing. A helical membrane pass occupies residues 165–185 (YLFFVSYGFQIVLLILTAFSG). The Cytoplasmic portion of the chain corresponds to 186–309 (PSDSTQTPSV…DYPKSWLIKS (124 aa)). A phosphoserine mark is found at S279 and S281. A helical membrane pass occupies residues 310-330 (LFKTFHVVILKSFILKLIHDL). Residues 318–601 (ILKSFILKLI…LPMVTSSILQ (284 aa)) form the ABC transmembrane type-1 1 domain. Topologically, residues 331–356 (LVFLNPQLLKLLIGFVKSSNSYVWFG) are extracellular. A helical transmembrane segment spans residues 357-377 (YICAILMFAVTLIQSFCLQSY). The Cytoplasmic portion of the chain corresponds to 378-433 (FQHCFVLGMCVRTTVMSSIYKKALTLSNLARKQYTIGETVNLMSVDSQKLMDATNY). Residues 434–454 (MQLVWSSVIQITLSIFFLWRE) traverse the membrane as a helical segment. Topologically, residues 455–457 (LGP) are extracellular. Residues 458-478 (SILAGVGVMVLLIPVNGVLAT) form a helical membrane-spanning segment. Residues 479–540 (KIRNIQVQNM…NLLRFGQLQS (62 aa)) lie on the Cytoplasmic side of the membrane. The chain crosses the membrane as a helical span at residues 541 to 561 (LLIFILQITPILVSVVTFSVY). Residues 562 to 583 (VLVDSANVLNAEKAFTSITLFN) lie on the Extracellular side of the membrane. A helical membrane pass occupies residues 584 to 604 (ILRFPLSMLPMVTSSILQASV). Topologically, residues 605–967 (SVDRLERYLG…VKFSIYLKYL (363 aa)) are cytoplasmic. The ABC transporter 1 domain maps to 633 to 857 (VKFSEASFTW…KGVFARNWKT (225 aa)). Position 667–674 (667–674 (GTVGSGKS)) interacts with ATP. 2 disordered regions span residues 862–881 (SGPE…DDDD) and 901–923 (RENS…GKSL). At S874 the chain carries Phosphoserine. Residues 906-915 (RRTLSRSSRS) are compositionally biased toward low complexity. Phosphoserine occurs at positions 922 and 926. Residues 968-988 (QAVGWWSILFIILFYGLNNVA) traverse the membrane as a helical segment. Positions 975–1260 (ILFIILFYGL…LVRMTSEAET (286 aa)) constitute an ABC transmembrane type-1 2 domain. Residues 989-1029 (FIGSNLWLSAWTSDSDNLNGTNNSSSHRDMRIGVFGALGLA) lie on the Extracellular side of the membrane. Residues N1007, N1010, and N1011 are each glycosylated (N-linked (GlcNAc...) asparagine). Residues 1030–1050 (QGICLLISTLWSIYACRNASK) traverse the membrane as a helical segment. Residues 1051 to 1093 (ALHGQLLTNILRAPMRFFDTTPTGRIVNRFSGDISTVDDLLPQ) are Cytoplasmic-facing. Residues 1094–1114 (TLRSWMMCFFGIAGTLVMICM) traverse the membrane as a helical segment. Position 1115 (A1115) is a topological domain, extracellular. A helical membrane pass occupies residues 1116-1136 (TPVFAIIIIPLSILYISVQVF). At 1137–1207 (YVATSRQLRR…TSNRWLAIRL (71 aa)) the chain is on the cytoplasmic side. The chain crosses the membrane as a helical span at residues 1208–1228 (ELVGNLVVFCSALLLVIYRKT). At 1229-1230 (LT) the chain is on the extracellular side. The chain crosses the membrane as a helical span at residues 1231–1251 (GDVVGFVLSNALNITQTLNWL). At 1252–1541 (VRMTSEAETN…GIENVNHTEL (290 aa)) the chain is on the cytoplasmic side. An ABC transporter 2 domain is found at 1296 to 1530 (IQFNNYQVRY…RGSFYLMAKE (235 aa)). An ATP-binding site is contributed by 1330-1337 (GRTGAGKS). Phosphoserine is present on S1434.

This sequence belongs to the ABC transporter superfamily. ABCC family. Conjugate transporter (TC 3.A.1.208) subfamily. Mainly expressed in the liver.

It localises to the apical cell membrane. It catalyses the reaction an S-substituted glutathione(in) + ATP + H2O = an S-substituted glutathione(out) + ADP + phosphate + H(+). The enzyme catalyses taurolithocholate 3-sulfate(in) + ATP + H2O = taurolithocholate 3-sulfate(out) + ADP + phosphate + H(+). It carries out the reaction ATP + H2O + xenobioticSide 1 = ADP + phosphate + xenobioticSide 2.. The catalysed reaction is 17beta-estradiol 17-O-(beta-D-glucuronate)(in) + ATP + H2O = 17beta-estradiol 17-O-(beta-D-glucuronate)(out) + ADP + phosphate + H(+). It catalyses the reaction leukotriene C4(in) + ATP + H2O = leukotriene C4(out) + ADP + phosphate + H(+). The enzyme catalyses (4Z,15Z)-bilirubin IXalpha C8-beta-D-glucuronoside(in) + ATP + H2O = (4Z,15Z)-bilirubin IXalpha C8-beta-D-glucuronoside(out) + ADP + phosphate + H(+). It carries out the reaction (4Z,15Z)-bilirubin IXalpha C8,C12-beta-D-bisglucuronoside(in) + ATP + H2O = (4Z,15Z)-bilirubin IXalpha C8,C12-beta-D-bisglucuronoside(out) + ADP + phosphate + H(+). Its function is as follows. ATP-dependent transporter of the ATP-binding cassette (ABC) family that binds and hydrolyzes ATP to enable active transport of various substrates including many drugs, toxicants and endogenous compound across cell membranes. Transports a wide variety of conjugated organic anions such as sulfate-, glucuronide- and glutathione (GSH)-conjugates of endo- and xenobiotics substrates. Mediates hepatobiliary excretion of mono- and bis-glucuronidated bilirubin molecules and therefore play an important role in bilirubin detoxification. Also mediates hepatobiliary excretion of others glucuronide conjugates such as 17beta-estradiol 17-glucosiduronic acid and leukotriene C4. Transports sulfated bile salt such as taurolithocholate sulfate. Transports various anticancer drugs, such as anthracycline, vinca alkaloid and methotrexate and HIV-drugs such as protease inhibitors. This Rattus norvegicus (Rat) protein is ATP-binding cassette sub-family C member 2.